Consider the following 92-residue polypeptide: Protein S100-B (92 aa).

Residue Ser2 is modified to N-acetylserine. EF-hand domains lie at 13 to 48 and 49 to 84; these read DVFH…LEEI and KEQE…VTTA. A Zn(2+)-binding site is contributed by His16. Positions 19, 22, and 24 each coordinate Ca(2+). A Zn(2+)-binding site is contributed by His26. Ca(2+)-binding residues include Asp62, Asp64, Asp66, Glu68, and Glu73. Zn(2+) is bound by residues His86 and His91.

This sequence belongs to the S-100 family. As to quaternary structure, dimer of either two alpha chains, or two beta chains, or one alpha and one beta chain. The S100B dimer binds two molecules of STK38. Interacts with CACYBP in a calcium-dependent manner. Interacts with ATAD3A; this interaction probably occurs in the cytosol prior to ATAD3A mitochondrial targeting. Interacts with S100A6. The S100B dimer interacts with two molecules of CAPZA1. Interacts with AGER. Interacts with PPP5C (via TPR repeats); the interaction is calcium-dependent and modulates PPP5C activity. Interacts with TPPP; this interaction inhibits TPPP dimerization. Interacts with isoform CLSTN3beta of CLSTN3; interaction promotes secretion.

The protein localises to the cytoplasm. It is found in the nucleus. It localises to the secreted. Functionally, small zinc- and- and calcium-binding protein that is highly expressed in astrocytes and constitutes one of the most abundant soluble proteins in brain. Weakly binds calcium but binds zinc very tightly-distinct binding sites with different affinities exist for both ions on each monomer. Physiological concentrations of potassium ion antagonize the binding of both divalent cations, especially affecting high-affinity calcium-binding sites. Acts as a neurotrophic factor that promotes astrocytosis and axonal proliferation. Involved in innervation of thermogenic adipose tissue by acting as an adipocyte-derived neurotrophic factor that promotes sympathetic innervation of adipose tissue. Binds to and initiates the activation of STK38 by releasing autoinhibitory intramolecular interactions within the kinase. Interaction with AGER after myocardial infarction may play a role in myocyte apoptosis by activating ERK1/2 and p53/TP53 signaling. Could assist ATAD3A cytoplasmic processing, preventing aggregation and favoring mitochondrial localization. May mediate calcium-dependent regulation on many physiological processes by interacting with other proteins, such as TPR-containing proteins, and modulating their activity. The protein is Protein S100-B of Mus musculus (Mouse).